We begin with the raw amino-acid sequence, 77 residues long: Subtilisin-chymotrypsin inhibitor CI-1C (77 aa).

Belongs to the protease inhibitor I13 (potato type I serine protease inhibitor) family.

In terms of biological role, inhibits both subtilisin and chymotrypsin. This is Subtilisin-chymotrypsin inhibitor CI-1C from Hordeum vulgare (Barley).